The following is a 223-amino-acid chain: Ubiquitin-conjugating enzyme E2 S-A (223 aa).

The region spanning 11 to 157 (HIIRLVYKEV…ARLLTEIHGG (147 aa)) is the UBC core domain. The active-site Glycyl thioester intermediate is Cys95. The disordered stretch occupies residues 170–223 (QDLASGASASSADPMIPGVLGGAEGPMAKKHAGERDKKLAAKKKLDKKRALRRL). Positions 209-223 (AAKKKLDKKRALRRL) are enriched in basic residues.

This sequence belongs to the ubiquitin-conjugating enzyme family.

It catalyses the reaction S-ubiquitinyl-[E1 ubiquitin-activating enzyme]-L-cysteine + [E2 ubiquitin-conjugating enzyme]-L-cysteine = [E1 ubiquitin-activating enzyme]-L-cysteine + S-ubiquitinyl-[E2 ubiquitin-conjugating enzyme]-L-cysteine.. It functions in the pathway protein modification; protein ubiquitination. Catalyzes the covalent attachment of ubiquitin to other proteins. Acts as an essential factor of the anaphase promoting complex/cyclosome (APC/C), a cell cycle-regulated ubiquitin ligase that controls progression through mitosis. Acts by specifically elongating 'Lys-11'-linked polyubiquitin chains initiated by the E2 enzyme ube2c/ubch10 on APC/C substrates, enhancing the degradation of APC/C substrates by the proteasome and promoting mitotic exit. This chain is Ubiquitin-conjugating enzyme E2 S-A (ube2s-a), found in Xenopus laevis (African clawed frog).